The chain runs to 387 residues: 3-ketoacyl-CoA thiolase (387 aa).

Catalysis depends on C91, which acts as the Acyl-thioester intermediate. Catalysis depends on proton acceptor residues H343 and C373.

The protein belongs to the thiolase-like superfamily. Thiolase family. In terms of assembly, heterotetramer of two alpha chains (FadB) and two beta chains (FadA).

It is found in the cytoplasm. The enzyme catalyses an acyl-CoA + acetyl-CoA = a 3-oxoacyl-CoA + CoA. The protein operates within lipid metabolism; fatty acid beta-oxidation. Functionally, catalyzes the final step of fatty acid oxidation in which acetyl-CoA is released and the CoA ester of a fatty acid two carbons shorter is formed. The protein is 3-ketoacyl-CoA thiolase of Photobacterium profundum (strain SS9).